The following is a 120-amino-acid chain: MSAQEIIRSIEAEQLKSNLPEIYIGDTVRVGVKIKEGDKYRVQPYEGVVIARRNGGINETITVRRVFQGVGVERVFLLHSPRIDNIKVLRRGKVRRAKLYYLRGRVGKATRIKQRFDRSL.

The protein belongs to the bacterial ribosomal protein bL19 family.

This protein is located at the 30S-50S ribosomal subunit interface and may play a role in the structure and function of the aminoacyl-tRNA binding site. The protein is Large ribosomal subunit protein bL19 of Trichormus variabilis (strain ATCC 29413 / PCC 7937) (Anabaena variabilis).